Reading from the N-terminus, the 359-residue chain is TGACG-sequence-specific DNA-binding protein TGA-1A (359 aa).

Basic and acidic residues predominate over residues 44–54; sequence KRLDNETEDTS. The segment at 44-72 is disordered; sequence KRLDNETEDTSHGTVGTSNRYEPETSKPV. A bZIP domain is found at 72 to 135; the sequence is VEKVLRRLAQ…GGVDASQLSY (64 aa). Residues 73–125 are a coiled coil; sequence EKVLRRLAQNREAARKSRLRKKAYVQQLENSKLKLIQLEQELERARKQGMCVG. Residues 74 to 94 are basic motif; the sequence is KVLRRLAQNREAARKSRLRKK. Residues 100–114 are leucine-zipper; the sequence is LENSKLKLIQLEQEL. The DOG1 domain occupies 143–354; the sequence is TAVFDMEYGH…RVLSSQWATR (212 aa).

The protein belongs to the bZIP family. In terms of assembly, binds DNA as a dimer.

It localises to the nucleus. Its function is as follows. Transcriptional activator that binds specifically to the DNA sequence 5'-TGACG-3'. Recognizes ocs elements like the as-1 motif of the cauliflower mosaic virus 35S promoter. Binding to the as-1-like cis elements mediate auxin- and salicylic acid-inducible transcription. Could also bind to the Hex-motif (5'-TGACGTGG-3') another cis-acting element found in plant histone promoters. The protein is TGACG-sequence-specific DNA-binding protein TGA-1A (TGA1A) of Nicotiana tabacum (Common tobacco).